The following is a 1052-amino-acid chain: Ubiquitin-like modifier-activating enzyme 6 (1052 aa).

An N-acetylmethionine modification is found at M1. The tract at residues 1–21 is disordered; it reads MEGSEPVAAHQGEEASCSSWG. R46 is a binding site for ATP. T54 carries the phosphothreonine modification. The residue at position 301 (S301) is a Phosphoserine. ATP contacts are provided by A470 and D497. Mg(2+)-binding residues include D499 and E502. Positions 505, 508, 509, and 521 each coordinate ATP. K544 carries the post-translational modification N6-acetyllysine. V545 serves as a coordination point for ATP. D569 lines the Mg(2+) pocket. Residue N570 coordinates ATP. C625 (glycyl thioester intermediate) is an active-site residue. K729 bears the N6-acetyllysine mark. A Phosphoserine modification is found at S737.

The protein belongs to the ubiquitin-activating E1 family. Forms a thioester with UBD in cells stimulated with tumor necrosis factor-alpha (TNFa) and interferon-gamma (IFNg). In terms of tissue distribution, widely expressed. Isoform 2 is predominantly expressed in testis with higher expression in adult testis than in fetal testis.

The enzyme catalyses ATP + ubiquitin + [E1 ubiquitin-activating enzyme]-L-cysteine = AMP + diphosphate + S-ubiquitinyl-[E1 ubiquitin-activating enzyme]-L-cysteine.. It participates in protein modification; protein ubiquitination. In terms of biological role, activates ubiquitin by first adenylating its C-terminal glycine residue with ATP, and thereafter linking this residue to the side chain of a cysteine residue in E1, yielding a ubiquitin-E1 thioester and free AMP. Specific for ubiquitin, does not activate ubiquitin-like peptides. Also activates UBD/FAT10 conjugation via adenylation of its C-terminal glycine. Differs from UBE1 in its specificity for substrate E2 charging. Does not charge cell cycle E2s, such as CDC34. Essential for embryonic development. Isoform 2 may play a key role in ubiquitin system and may influence spermatogenesis and male fertility. The sequence is that of Ubiquitin-like modifier-activating enzyme 6 (UBA6) from Homo sapiens (Human).